A 180-amino-acid chain; its full sequence is MFEATTILGYKGEYNGKKCAIIGGDGQVTFGNCVLKNNATKIRTLYNGEILSGFAGSTADAFSLFDMFERILEGRKGDLVRSVLEFSKEWRKDKYLRKLEAMMIVLNTEHIYILSGTGDVVEPEDGTIAAIGSGGNYALSAARALHNYASLPPREIVEHSLAIAGELCIYTNTNIKILEL.

Thr-5 is a catalytic residue. 3 residues coordinate Na(+): Gly-165, Cys-168, and Thr-171.

The protein belongs to the peptidase T1B family. HslV subfamily. A double ring-shaped homohexamer of HslV is capped on each side by a ring-shaped HslU homohexamer. The assembly of the HslU/HslV complex is dependent on binding of ATP.

The protein localises to the cytoplasm. The catalysed reaction is ATP-dependent cleavage of peptide bonds with broad specificity.. Allosterically activated by HslU binding. Its function is as follows. Protease subunit of a proteasome-like degradation complex believed to be a general protein degrading machinery. The sequence is that of ATP-dependent protease subunit HslV from Helicobacter hepaticus (strain ATCC 51449 / 3B1).